Here is a 407-residue protein sequence, read N- to C-terminus: tRNA (guanine(26)-N(2))-dimethyltransferase (407 aa).

Residues 10-400 form the Trm1 methyltransferase domain; sequence AVTHEGRSII…APWGEVLEAV (391 aa). S-adenosyl-L-methionine is bound by residues Arg-50, Arg-82, Asp-99, and Glu-128.

The protein belongs to the class I-like SAM-binding methyltransferase superfamily. Trm1 family.

It catalyses the reaction guanosine(26) in tRNA + 2 S-adenosyl-L-methionine = N(2)-dimethylguanosine(26) in tRNA + 2 S-adenosyl-L-homocysteine + 2 H(+). Dimethylates a single guanine residue at position 26 of a number of tRNAs using S-adenosyl-L-methionine as donor of the methyl groups. The protein is tRNA (guanine(26)-N(2))-dimethyltransferase of Aeropyrum pernix (strain ATCC 700893 / DSM 11879 / JCM 9820 / NBRC 100138 / K1).